The following is a 220-amino-acid chain: Meiotic nuclear division protein 1 homolog (220 aa).

Residues 76–147 adopt a coiled-coil conformation; sequence SKALHARKRR…KVEIEKYQEC (72 aa).

This sequence belongs to the MND1 family.

The protein resides in the nucleus. Functionally, required for proper homologous chromosome pairing and efficient cross-over and intragenic recombination during meiosis. Stimulates both DMC1- and RAD51-mediated homologous strand assimilation, which is required for the resolution of meiotic double-strand breaks. This chain is Meiotic nuclear division protein 1 homolog, found in Danio rerio (Zebrafish).